The following is a 245-amino-acid chain: Tetraspanin-6 (245 aa).

Topologically, residues 1–19 (MASPSRRLQTKPVITCLKS) are cytoplasmic. The chain crosses the membrane as a helical span at residues 20–40 (VLLIYTFIFWITGVILLAVGI). Over 41 to 59 (WGKVSLENYFSLLNEKATN) the chain is Extracellular. The helical transmembrane segment at 60–80 (VPFVLIGTGTVIILLGTFGCF) threads the bilayer. Over 81–93 (ATCRTSAWMLKLY) the chain is Cytoplasmic. Residues 94–114 (AMFLTLIFLVELVAAIVGFVF) form a helical membrane-spanning segment. Over 115–208 (RHEIKNSFKS…IKVMTTIESE (94 aa)) the chain is Extracellular. N-linked (GlcNAc...) asparagine glycosylation occurs at Asn-134. A helical transmembrane segment spans residues 209–229 (MGVVAGISFGVACFQLIGIFL). Over 230-245 (AYCLSRAITNNQYEIV) the chain is Cytoplasmic.

This sequence belongs to the tetraspanin (TM4SF) family.

Its subcellular location is the membrane. This Mus musculus (Mouse) protein is Tetraspanin-6 (Tspan6).